A 159-amino-acid polypeptide reads, in one-letter code: Phosphopantetheine adenylyltransferase (159 aa).

Residue S8 participates in substrate binding. ATP-binding positions include 8 to 9 (SF) and H16. K40, T72, and R86 together coordinate substrate. ATP contacts are provided by residues 87-89 (GLR), E97, and 122-128 (HSFVSSS).

Belongs to the bacterial CoaD family. Homohexamer. The cofactor is Mg(2+).

It localises to the cytoplasm. It catalyses the reaction (R)-4'-phosphopantetheine + ATP + H(+) = 3'-dephospho-CoA + diphosphate. The protein operates within cofactor biosynthesis; coenzyme A biosynthesis; CoA from (R)-pantothenate: step 4/5. Functionally, reversibly transfers an adenylyl group from ATP to 4'-phosphopantetheine, yielding dephospho-CoA (dPCoA) and pyrophosphate. The polypeptide is Phosphopantetheine adenylyltransferase (Synechococcus sp. (strain JA-3-3Ab) (Cyanobacteria bacterium Yellowstone A-Prime)).